Here is a 184-residue protein sequence, read N- to C-terminus: Translation initiation factor IF-3 (184 aa).

It belongs to the IF-3 family. Monomer.

The protein localises to the cytoplasm. Its function is as follows. IF-3 binds to the 30S ribosomal subunit and shifts the equilibrium between 70S ribosomes and their 50S and 30S subunits in favor of the free subunits, thus enhancing the availability of 30S subunits on which protein synthesis initiation begins. The polypeptide is Translation initiation factor IF-3 (Hamiltonella defensa subsp. Acyrthosiphon pisum (strain 5AT)).